Here is a 316-residue protein sequence, read N- to C-terminus: Insulin-like growth factor-binding protein 2 (316 aa).

Positions 1–29 are cleaved as a signal peptide; the sequence is MLPRLGGTALSLLPLLLLLLGTGGRGARA. An IGFBP N-terminal domain is found at 31–126; sequence VLFRCPPCTP…VLGEGTCEKR (96 aa). Intrachain disulfides connect Cys-35–Cys-76, Cys-38–Cys-78, Cys-46–Cys-79, Cys-68–Cys-82, Cys-90–Cys-103, and Cys-97–Cys-123. The interval 189-217 is disordered; the sequence is QHRQMGKGGKHHLGLEEPKKLRPPPARTP. The Thyroglobulin type-1 domain occupies 215–297; that stretch reads RTPCQQELDQ…APTIRGDPEC (83 aa). Intrachain disulfides connect Cys-218-Cys-252, Cys-263-Cys-274, and Cys-276-Cys-297. Positions 292–294 match the Cell attachment site motif; the sequence is RGD.

Interacts with IGF1. Interacts with IGF2. Interacts (via RGD motif) with integrin alpha5/ITGA5; this interaction induces cell migration, adhesion or apoptosis according to the context. Interacts with PTPRB; this interaction leads to PTPRB dimerization and inactivation. In terms of processing, cleaved by MMP9 leading to release of free IGF2 from IGFBP2-IGF2 complex, which contributes to enhance the motility and the growth of astrocytes. Post-translationally, O-glycosylated.

The protein localises to the secreted. In terms of biological role, may have both growth-inhibiting and growth-promoting effects, depending on tissue type; increases IGF-induced DNA synthesis in the uterine epithelium. IGF-binding proteins prolong the half-life of the IGFs and have been shown to either inhibit or stimulate the growth promoting effects of the IGFs on cell culture. They alter the interaction of IGFs with their cell surface receptors. Functionally, multifunctional protein that plays a critical role in regulating the availability of IGFs such as IGF1 and IGF2 to their receptors and thereby regulates IGF-mediated cellular processes including proliferation, differentiation, and apoptosis in a cell-type specific manner. Functions coordinately with receptor protein tyrosine phosphatase beta/PTPRB and the IGF1 receptor to regulate IGF1-mediated signaling by stimulating the phosphorylation of PTEN leading to its inactivation and AKT1 activation. Plays a positive role in cell migration via interaction with integrin alpha5/ITGA5 through an RGD motif. Additionally, interaction with ITGA5/ITGB1 enhances the adhesion of endothelial progenitor cells to endothelial cells. Upon mitochondrial damage, facilitates apoptosis with ITGA5 of podocytes, and then activates the phosphorylation of focal adhesion kinase (FAK)-mediated mitochondrial injury. This is Insulin-like growth factor-binding protein 2 (IGFBP2) from Sus scrofa (Pig).